Consider the following 138-residue polypeptide: ATP synthase epsilon chain (138 aa).

Belongs to the ATPase epsilon chain family. As to quaternary structure, F-type ATPases have 2 components, CF(1) - the catalytic core - and CF(0) - the membrane proton channel. CF(1) has five subunits: alpha(3), beta(3), gamma(1), delta(1), epsilon(1). CF(0) has three main subunits: a, b and c.

Its subcellular location is the cell inner membrane. Functionally, produces ATP from ADP in the presence of a proton gradient across the membrane. This is ATP synthase epsilon chain from Verminephrobacter eiseniae (strain EF01-2).